The sequence spans 274 residues: Exosome complex component Rrp42 (274 aa).

This sequence belongs to the RNase PH family. Rrp42 subfamily. In terms of assembly, component of the archaeal exosome complex. Forms a hexameric ring-like arrangement composed of 3 Rrp41-Rrp42 heterodimers. The hexameric ring associates with a trimer of Rrp4 and/or Csl4 subunits.

It is found in the cytoplasm. Functionally, non-catalytic component of the exosome, which is a complex involved in RNA degradation. Contributes to the structuring of the Rrp41 active site. In Pyrococcus horikoshii (strain ATCC 700860 / DSM 12428 / JCM 9974 / NBRC 100139 / OT-3), this protein is Exosome complex component Rrp42.